Here is a 537-residue protein sequence, read N- to C-terminus: Tegument protein BRRF2 (537 aa).

Disordered stretches follow at residues Leu325–Asp474 and Gly486–Ile537. Residues Lys334 to Asn347 show a composition bias toward polar residues. Residues Ser423–Gly441 show a composition bias toward low complexity. The segment covering Asp492 to Glu517 has biased composition (acidic residues).

Belongs to the lymphocryptovirus BRRF2 family.

The protein localises to the virion tegument. This chain is Tegument protein BRRF2, found in Homo sapiens (Human).